The sequence spans 182 residues: Small ribosomal subunit protein uS4c (182 aa).

The S4 RNA-binding domain occupies 82-143 (MRLDNILFRL…KQRSKALIQN (62 aa)).

Belongs to the universal ribosomal protein uS4 family. Part of the 30S ribosomal subunit. Contacts protein S5. The interaction surface between S4 and S5 is involved in control of translational fidelity.

The protein localises to the plastid. It localises to the chloroplast. Its function is as follows. One of the primary rRNA binding proteins, it binds directly to 16S rRNA where it nucleates assembly of the body of the 30S subunit. In terms of biological role, with S5 and S12 plays an important role in translational accuracy. This is Small ribosomal subunit protein uS4c (rps4) from Libertia formosa (Snowy mermaid).